The following is a 286-amino-acid chain: E3 ubiquitin-protein ligase SINA-like 7 (286 aa).

Residues 51–87 (CPICYEAFTIPIFQCDNGHLACSSCCPKLNNKCPACT) form an RING-type zinc finger. An SBD region spans residues 101–285 (VLESILIPCP…MRISVKKLNK (185 aa)). Residues 104–162 (SILIPCPNAKLGCKKNVSYGKELTHEKECMFSHCACPALDCNYTSSYKDLYTHYRITHM) form an SIAH-type zinc finger. The Zn(2+) site is built by C109, C116, H128, C132, C139, C144, H156, and H161.

This sequence belongs to the SINA (Seven in absentia) family.

It catalyses the reaction S-ubiquitinyl-[E2 ubiquitin-conjugating enzyme]-L-cysteine + [acceptor protein]-L-lysine = [E2 ubiquitin-conjugating enzyme]-L-cysteine + N(6)-ubiquitinyl-[acceptor protein]-L-lysine.. The protein operates within protein modification; protein ubiquitination. Its function is as follows. E3 ubiquitin-protein ligase that mediates ubiquitination and subsequent proteasomal degradation of target proteins. E3 ubiquitin ligases accept ubiquitin from an E2 ubiquitin-conjugating enzyme in the form of a thioester and then directly transfers the ubiquitin to targeted substrates. It probably triggers the ubiquitin-mediated degradation of different substrates. The chain is E3 ubiquitin-protein ligase SINA-like 7 from Arabidopsis thaliana (Mouse-ear cress).